The sequence spans 394 residues: MAKAKFERIKPHVNVGTIGHVDHGKTTLTAAISHVLAKTYGGEAKDFSQIDNAPEERERGITINTSHIEYDTPTRHYAHVDCPGHADYVKNMITGAAQMDGAILVVASTDGPMPQTREHILLSRQVGVPYIIVFMNKCDMVDDEELLELVEMEVRELLSEYDFPGDDLPVIQGSALKALEGQPEWEAKIIELANALDSYIPEPQRDIDKPFLLPIEDVFSISGRGTVVTGRVERGIVKVGDEVEIVGVRTTTKTTCTGVEMFRKLLDEGRAGENCGVLLRGTKRDDVERGQVLAKPGSINPHTTFESEVYVLSKEEGGRHTPFFKGYRPQFYFRTTDVTGTIELPEGVEMVMPGDNIKMVVTLICPIAMDEGLRFAIREGGRTVGAGVVAKIIA.

Residues 10–204 (KPHVNVGTIG…ALDSYIPEPQ (195 aa)) enclose the tr-type G domain. Residues 19–26 (GHVDHGKT) are G1. Position 19 to 26 (19 to 26 (GHVDHGKT)) interacts with GTP. Thr-26 contacts Mg(2+). Residues 60 to 64 (GITIN) are G2. Residues 81–84 (DCPG) form a G3 region. GTP contacts are provided by residues 81 to 85 (DCPGH) and 136 to 139 (NKCD). The segment at 136–139 (NKCD) is G4. Positions 174 to 176 (SAL) are G5.

It belongs to the TRAFAC class translation factor GTPase superfamily. Classic translation factor GTPase family. EF-Tu/EF-1A subfamily. Monomer.

The protein localises to the cytoplasm. The catalysed reaction is GTP + H2O = GDP + phosphate + H(+). In terms of biological role, GTP hydrolase that promotes the GTP-dependent binding of aminoacyl-tRNA to the A-site of ribosomes during protein biosynthesis. This chain is Elongation factor Tu 1, found in Shewanella baltica (strain OS195).